Here is a 229-residue protein sequence, read N- to C-terminus: Phosphatidylinositol N-acetylglucosaminyltransferase subunit GPI15 (229 aa).

2 helical membrane passes run 59 to 79 (IQYH…VICL) and 101 to 121 (ILII…GPSV).

This sequence belongs to the PIGH family. In terms of assembly, component of the phosphatidylinositol N-acetylglucosaminyltransferase (GPI-GlcNAc transferase) complex composed of at least GPI1, GPI2, GPI3, GPI15, GPI19 and ERI1.

The protein localises to the membrane. The enzyme catalyses a 1,2-diacyl-sn-glycero-3-phospho-(1D-myo-inositol) + UDP-N-acetyl-alpha-D-glucosamine = a 6-(N-acetyl-alpha-D-glucosaminyl)-1-(1,2-diacyl-sn-glycero-3-phospho)-1D-myo-inositol + UDP + H(+). It participates in glycolipid biosynthesis; glycosylphosphatidylinositol-anchor biosynthesis. Functionally, part of the complex catalyzing the transfer of N-acetylglucosamine from UDP-N-acetylglucosamine to phosphatidylinositol, the first step of GPI biosynthesis. This is Phosphatidylinositol N-acetylglucosaminyltransferase subunit GPI15 (GPI15) from Saccharomyces cerevisiae (strain ATCC 204508 / S288c) (Baker's yeast).